Reading from the N-terminus, the 435-residue chain is MSTGFFGDIQKVRYEGPESDNPLAFRHYNADEIVLGKRMEDHLRFAVAYWHSFAWEGGDPFGGRTFDRPWFSNEIDAAKLKADVAFEFFSLLGAPYYCFHDADVRPEGRNFAENTRYLNEIVDIFEKKQAETGMKLLWGTANLFSNRRYMAGAATNPDPDVFAFAAATVKTCIDATKRLGGENYVLWGGREGYETLLNTDLSRELDHMGRFLSLVVEYKHKIGFKGTILIEPKPQEPTKHQYDYDVATVYGFLKRYGLENEVKVNIEQGHAILAGHSFEHELALARTLGIFGSIDMNRNDYQSGWDTDQFPNNVPEMALAYYQVLLAGGFTTGGTNFDAKLRRQSLDPQDLLIGHIGGMDCCARGLKAAARMLEDGALSKPLDERYAGWNGEFGKRLLSGLSLDQIAGEVEAKDINPQPKSGRQEYLENIVNRYV.

Aspartate 306 and aspartate 308 together coordinate Mg(2+).

It belongs to the xylose isomerase family. Homotetramer. It depends on Mg(2+) as a cofactor.

The protein localises to the cytoplasm. The enzyme catalyses alpha-D-xylose = alpha-D-xylulofuranose. This chain is Xylose isomerase, found in Brucella melitensis biotype 2 (strain ATCC 23457).